The primary structure comprises 250 residues: Adenosylcobinamide-GDP ribazoletransferase (250 aa).

The next 6 membrane-spanning stretches (helical) occupy residues 31–51, 55–75, 106–126, 133–153, 187–207, and 230–250; these read ISYL…VYFV, FILG…ITGA, VGTN…AVLN, IIIA…LLMC, IGYV…VLFI, and NEIA…CGLL.

The protein belongs to the CobS family. The cofactor is Mg(2+).

The protein resides in the cell membrane. The catalysed reaction is alpha-ribazole + adenosylcob(III)inamide-GDP = adenosylcob(III)alamin + GMP + H(+). The enzyme catalyses alpha-ribazole 5'-phosphate + adenosylcob(III)inamide-GDP = adenosylcob(III)alamin 5'-phosphate + GMP + H(+). The protein operates within cofactor biosynthesis; adenosylcobalamin biosynthesis; adenosylcobalamin from cob(II)yrinate a,c-diamide: step 7/7. Joins adenosylcobinamide-GDP and alpha-ribazole to generate adenosylcobalamin (Ado-cobalamin). Also synthesizes adenosylcobalamin 5'-phosphate from adenosylcobinamide-GDP and alpha-ribazole 5'-phosphate. In Clostridium novyi (strain NT), this protein is Adenosylcobinamide-GDP ribazoletransferase.